Here is a 281-residue protein sequence, read N- to C-terminus: Small ribosomal subunit protein uS2 (281 aa).

The interval 225–281 (LMERKAEKPEEEETEEAAPRRERRARSGARRSRQNENEATAEAATEVAEAPEAEEAE) is disordered. Basic residues predominate over residues 245–256 (RERRARSGARRS). Residues 262–272 (EATAEAATEVA) are compositionally biased toward low complexity.

It belongs to the universal ribosomal protein uS2 family.

This is Small ribosomal subunit protein uS2 from Porphyromonas gingivalis (strain ATCC 33277 / DSM 20709 / CIP 103683 / JCM 12257 / NCTC 11834 / 2561).